The primary structure comprises 699 residues: Catalase-peroxidase (699 aa).

Residues 72–200 (WHSAGTYRIA…LAAVMMGLIY (129 aa)) constitute a cross-link (tryptophyl-tyrosyl-methioninium (Trp-Tyr) (with M-226)). Residue His-73 is the Proton acceptor of the active site. Residues 200 to 226 (YVNPEGVDGNPDPLKTAKDMRVTFARM) constitute a cross-link (tryptophyl-tyrosyl-methioninium (Tyr-Met) (with W-72)). A heme b-binding site is contributed by His-241.

This sequence belongs to the peroxidase family. Peroxidase/catalase subfamily. Homodimer or homotetramer. Heme b serves as cofactor. In terms of processing, formation of the three residue Trp-Tyr-Met cross-link is important for the catalase, but not the peroxidase activity of the enzyme.

The catalysed reaction is H2O2 + AH2 = A + 2 H2O. The enzyme catalyses 2 H2O2 = O2 + 2 H2O. In terms of biological role, bifunctional enzyme with both catalase and broad-spectrum peroxidase activity. The protein is Catalase-peroxidase of Aeromonas salmonicida (strain A449).